The chain runs to 474 residues: Sporulation-specific protein 6 (474 aa).

The region spanning R125–M178 is the BRCT domain. A DBF4-type zinc finger spans residues I421–P470. Zn(2+) is bound by residues C428, C431, H441, and H447.

The protein localises to the nucleus. Its function is as follows. May act as a kinase regulator. Essential for progression of meiosis II and sporulation. This Schizosaccharomyces pombe (strain 972 / ATCC 24843) (Fission yeast) protein is Sporulation-specific protein 6 (spo6).